The primary structure comprises 201 residues: Small ribosomal subunit protein uS4c (201 aa).

The S4 RNA-binding domain occupies 89 to 150 (MRLDNILFRL…KQRSKVLIQN (62 aa)).

It belongs to the universal ribosomal protein uS4 family. In terms of assembly, part of the 30S ribosomal subunit. Contacts protein S5. The interaction surface between S4 and S5 is involved in control of translational fidelity.

The protein resides in the plastid. It localises to the chloroplast. One of the primary rRNA binding proteins, it binds directly to 16S rRNA where it nucleates assembly of the body of the 30S subunit. Its function is as follows. With S5 and S12 plays an important role in translational accuracy. This Acorus calamus (Sweet flag) protein is Small ribosomal subunit protein uS4c (rps4).